The chain runs to 435 residues: Putative FBD-associated F-box protein At5g56820 (435 aa).

In terms of domain architecture, F-box spans 14 to 60 (SDRISYLPDDLLLRILSFIHTSDAISTSLLSKRWKFVWKMMPTLDLD). The 50-residue stretch at 341 to 390 (VRKPNSVPECLTFHLETLEWQGYAGRPEDKEIAVYILGNALRLNTATISR) folds into the FBD domain.

The polypeptide is Putative FBD-associated F-box protein At5g56820 (Arabidopsis thaliana (Mouse-ear cress)).